The primary structure comprises 147 residues: Large ribosomal subunit protein bL9 (147 aa).

It belongs to the bacterial ribosomal protein bL9 family.

Its function is as follows. Binds to the 23S rRNA. The chain is Large ribosomal subunit protein bL9 from Geotalea daltonii (strain DSM 22248 / JCM 15807 / FRC-32) (Geobacter daltonii).